Here is a 596-residue protein sequence, read N- to C-terminus: Aspartate--tRNA(Asp/Asn) ligase (596 aa).

Glutamate 172 serves as a coordination point for L-aspartate. The tract at residues 196-199 is aspartate; it reads QLFK. Arginine 218 is an L-aspartate binding site. Residues 218–220 and glutamine 227 each bind ATP; that span reads RDE. Histidine 455 serves as a coordination point for L-aspartate. Residue glutamate 489 coordinates ATP. L-aspartate is bound at residue arginine 496. 541–544 is an ATP binding site; sequence GLDR.

The protein belongs to the class-II aminoacyl-tRNA synthetase family. Type 1 subfamily. In terms of assembly, homodimer.

The protein localises to the cytoplasm. The enzyme catalyses tRNA(Asx) + L-aspartate + ATP = L-aspartyl-tRNA(Asx) + AMP + diphosphate. Aspartyl-tRNA synthetase with relaxed tRNA specificity since it is able to aspartylate not only its cognate tRNA(Asp) but also tRNA(Asn). Reaction proceeds in two steps: L-aspartate is first activated by ATP to form Asp-AMP and then transferred to the acceptor end of tRNA(Asp/Asn). This chain is Aspartate--tRNA(Asp/Asn) ligase, found in Bordetella bronchiseptica (strain ATCC BAA-588 / NCTC 13252 / RB50) (Alcaligenes bronchisepticus).